The sequence spans 365 residues: PDZ and LIM domain protein 3 (365 aa).

Residues 1 to 84 enclose the PDZ domain; it reads MPQNVILPGP…QLCLKIDRAE (84 aa). Serine 18 carries the post-translational modification Phosphoserine. Residues 126 to 156 are disordered; the sequence is FIIPGRSSGCSTPSGIDGGSGRSTPSSVSTL. Polar residues predominate over residues 147 to 156; that stretch reads RSTPSSVSTL. In terms of domain architecture, LIM zinc-binding spans 293 to 352; it reads PLCDKCGSGIVGAVVKARDKYRHPECFVCADCNLNLKQKGYFFVEGELYCETHARARMRP.

Interacts with ACTN2. Forms a heterodimer with PDLIM4 (via LIM domain).

The protein resides in the cytoplasm. Its subcellular location is the myofibril. It is found in the sarcomere. The protein localises to the z line. Its function is as follows. May play a role in the organization of actin filament arrays within muscle cells. The sequence is that of PDZ and LIM domain protein 3 (PDLIM3) from Sus scrofa (Pig).